A 1962-amino-acid polypeptide reads, in one-letter code: Myosin heavy chain, muscle (1962 aa).

Residues 33 to 82 (DSKKSCWIPDEKEGYLLGEIKATKGDIVSVGLQGGEVRDIKSEKVEKVNP) enclose the Myosin N-terminal SH3-like domain. A Myosin motor domain is found at 86-777 (EKIEDMADMT…VLGQMEEFRD (692 aa)). 179–186 (GESGAGKT) contributes to the ATP binding site. Residues 656 to 678 (LNSLMTTLRSTQPHFVRCIIPNE) form an actin-binding region. Residues 780–809 (LGKIMSWMQAWARGYLSRKGFKKLQEQRVA) form the IQ domain. Residues 802–1927 (KLQEQRVALK…KFRAKGRAGS (1126 aa)) adopt a coiled-coil conformation. 2 disordered regions span residues 1822-1862 (ENEL…NHER) and 1922-1962 (KGRA…ENEF).

Belongs to the TRAFAC class myosin-kinesin ATPase superfamily. Myosin family. In terms of assembly, muscle myosin is a hexameric protein that consists of 2 heavy chain subunits (MHC), 2 alkali light chain subunits (MLC) and 2 regulatory light chain subunits (MLC-2). As to expression, expressed in larval and adult muscles. Isoforms containing exon 9a are expressed in indirect flight muscles, exons 9a and 9b are expressed in jump muscles, exons 9b and 9c are expressed in other larval and adult muscles.

The protein localises to the cytoplasm. Its subcellular location is the myofibril. Functionally, muscle contraction. The sequence is that of Myosin heavy chain, muscle (Mhc) from Drosophila melanogaster (Fruit fly).